A 341-amino-acid polypeptide reads, in one-letter code: GTPase Obg (341 aa).

The Obg domain maps to 1-159; that stretch reads MKFLDQAKVY…RAIWLRLKLI (159 aa). An OBG-type G domain is found at 160 to 327; that stretch reads ADAGLVGLPN…VLRAGAHIIE (168 aa). GTP is bound by residues 166 to 173, 191 to 195, 212 to 215, 279 to 282, and 308 to 310; these read GLPNAGKS, FTTLH, DIPG, SQID, and SAV. Mg(2+)-binding residues include Ser-173 and Thr-193.

This sequence belongs to the TRAFAC class OBG-HflX-like GTPase superfamily. OBG GTPase family. Monomer. Mg(2+) is required as a cofactor.

The protein localises to the cytoplasm. In terms of biological role, an essential GTPase which binds GTP, GDP and possibly (p)ppGpp with moderate affinity, with high nucleotide exchange rates and a fairly low GTP hydrolysis rate. Plays a role in control of the cell cycle, stress response, ribosome biogenesis and in those bacteria that undergo differentiation, in morphogenesis control. The chain is GTPase Obg from Bartonella tribocorum (strain CIP 105476 / IBS 506).